We begin with the raw amino-acid sequence, 87 residues long: Conotoxin Cl12.3 (87 aa).

The N-terminal stretch at 1–19 (MKLTCVLVVLLLFLPYGDL) is a signal peptide. A propeptide spanning residues 20–42 (ITNNYIGGAARKVTPWRRNLKTR) is cleaved from the precursor.

It belongs to the conotoxin O1 superfamily. Contains 4 disulfide bonds. In terms of tissue distribution, expressed by the venom duct.

The protein resides in the secreted. This Californiconus californicus (California cone) protein is Conotoxin Cl12.3.